Here is a 479-residue protein sequence, read N- to C-terminus: Trigger factor (479 aa).

One can recognise a PPIase FKBP-type domain in the interval glycine 174–proline 261. Residues valine 438 to serine 479 are disordered. Over residues lysine 453–threonine 464 the composition is skewed to basic residues. A compositionally biased stretch (basic and acidic residues) spans asparagine 468–serine 479.

Belongs to the FKBP-type PPIase family. Tig subfamily.

It localises to the cytoplasm. It carries out the reaction [protein]-peptidylproline (omega=180) = [protein]-peptidylproline (omega=0). Functionally, involved in protein export. Acts as a chaperone by maintaining the newly synthesized protein in an open conformation. Functions as a peptidyl-prolyl cis-trans isomerase. The chain is Trigger factor from Prochlorococcus marinus (strain MIT 9313).